Consider the following 196-residue polypeptide: Pyridoxal 5'-phosphate synthase subunit PdxT (196 aa).

Residue 47–49 (GES) participates in L-glutamine binding. C79 acts as the Nucleophile in catalysis. L-glutamine is bound by residues R106 and 134–135 (IR). Active-site charge relay system residues include H170 and E172.

It belongs to the glutaminase PdxT/SNO family. As to quaternary structure, in the presence of PdxS, forms a dodecamer of heterodimers. Only shows activity in the heterodimer.

The catalysed reaction is aldehydo-D-ribose 5-phosphate + D-glyceraldehyde 3-phosphate + L-glutamine = pyridoxal 5'-phosphate + L-glutamate + phosphate + 3 H2O + H(+). It catalyses the reaction L-glutamine + H2O = L-glutamate + NH4(+). The protein operates within cofactor biosynthesis; pyridoxal 5'-phosphate biosynthesis. In terms of biological role, catalyzes the hydrolysis of glutamine to glutamate and ammonia as part of the biosynthesis of pyridoxal 5'-phosphate. The resulting ammonia molecule is channeled to the active site of PdxS. This is Pyridoxal 5'-phosphate synthase subunit PdxT from Bacillus velezensis (strain DSM 23117 / BGSC 10A6 / LMG 26770 / FZB42) (Bacillus amyloliquefaciens subsp. plantarum).